A 308-amino-acid chain; its full sequence is Olfactory receptor 2T7 (308 aa).

Residues 1–17 are Extracellular-facing; the sequence is MPTLSFWVCSATPVSPG. Residues 18–40 traverse the membrane as a helical segment; that stretch reads FFALILLVFVTSIASNVVKIILI. Over 41–51 the chain is Cytoplasmic; the sequence is HIDSRLHTPMY. The helical transmembrane segment at 52–74 threads the bilayer; sequence FLLSQLSLRDILYISTIVPKMLV. Topologically, residues 75–88 are extracellular; it reads DQVMSQRAISFAGC. Cys-88 and Cys-170 are oxidised to a cystine. The chain crosses the membrane as a helical span at residues 89-109; the sequence is TAQHFLYLTLAGAEFFLLGLM. Residues 110-130 lie on the Cytoplasmic side of the membrane; sequence SCDRYVAICNPLHYPDLMSRK. The chain crosses the membrane as a helical span at residues 131–151; it reads ICWLIVAAAWLGGSIDGFLLT. The Extracellular portion of the chain corresponds to 152–188; it reads PVTMQFPFCASREINHFFCEVPALLKLSCTDTSAYET. The helical transmembrane segment at 189–209 threads the bilayer; sequence AMYVCCIMMLLIPFSVISGSY. Topologically, residues 210–235 are cytoplasmic; it reads TRILITVYRMSEAEGRRKAVATCSSH. A helical transmembrane segment spans residues 236–256; the sequence is MVVVSLFYGAAMYTYVLPHSY. The Extracellular portion of the chain corresponds to 257 to 262; sequence HTPEQD. The chain crosses the membrane as a helical span at residues 263–283; it reads KAVSAFYTILTPMLNPLIYSL. Over 284–308 the chain is Cytoplasmic; sequence RNKDVTGALQKVVGRCVSSGKVTTF.

This sequence belongs to the G-protein coupled receptor 1 family.

It is found in the cell membrane. Odorant receptor. This Homo sapiens (Human) protein is Olfactory receptor 2T7 (OR2T7).